The primary structure comprises 184 residues: Ribosome-recycling factor (184 aa).

The disordered stretch occupies residues 141–164 (DEKNGDITEDDLRSQTEDVQKATD).

Belongs to the RRF family.

The protein resides in the cytoplasm. Its function is as follows. Responsible for the release of ribosomes from messenger RNA at the termination of protein biosynthesis. May increase the efficiency of translation by recycling ribosomes from one round of translation to another. In Staphylococcus haemolyticus (strain JCSC1435), this protein is Ribosome-recycling factor.